The chain runs to 233 residues: Purine nucleoside phosphorylase DeoD-type (233 aa).

Histidine 4 contributes to the a purine D-ribonucleoside binding site. Phosphate is bound by residues glycine 20, arginine 24, arginine 43, and 87–90 (RIGT). A purine D-ribonucleoside contacts are provided by residues 179–181 (EME) and 203–204 (SD). Aspartate 204 acts as the Proton donor in catalysis.

The protein belongs to the PNP/UDP phosphorylase family. Homohexamer; trimer of homodimers.

The enzyme catalyses a purine D-ribonucleoside + phosphate = a purine nucleobase + alpha-D-ribose 1-phosphate. It catalyses the reaction a purine 2'-deoxy-D-ribonucleoside + phosphate = a purine nucleobase + 2-deoxy-alpha-D-ribose 1-phosphate. Catalyzes the reversible phosphorolytic breakdown of the N-glycosidic bond in the beta-(deoxy)ribonucleoside molecules, with the formation of the corresponding free purine bases and pentose-1-phosphate. This is Purine nucleoside phosphorylase DeoD-type from Helicobacter pylori (strain P12).